Consider the following 257-residue polypeptide: 5'-nucleotidase SurE (257 aa).

Residues Asp9, Asp10, Ser42, and Asn96 each coordinate a divalent metal cation.

This sequence belongs to the SurE nucleotidase family. The cofactor is a divalent metal cation.

The protein resides in the cytoplasm. The catalysed reaction is a ribonucleoside 5'-phosphate + H2O = a ribonucleoside + phosphate. Its function is as follows. Nucleotidase that shows phosphatase activity on nucleoside 5'-monophosphates. This is 5'-nucleotidase SurE from Campylobacter lari (strain RM2100 / D67 / ATCC BAA-1060).